Consider the following 629-residue polypeptide: (-)-alpha pinene synthase 1, chloroplastic (629 aa).

Residues 1 to 48 constitute a chloroplast transit peptide; the sequence is MSPVSVISLPSDLCLPTSFIDRSGRELNPLHITIPNVAMRRQGKLMTR. Positions 380, 384, and 532 each coordinate Mg(2+). The DDXXD motif signature appears at 380-384; that stretch reads DDMYD.

Belongs to the terpene synthase family. Tpsd subfamily. Mg(2+) serves as cofactor. It depends on Mn(2+) as a cofactor.

It is found in the plastid. The protein localises to the chloroplast. The enzyme catalyses (2E)-geranyl diphosphate = (1S,5S)-alpha-pinene + diphosphate. The catalysed reaction is (2E)-geranyl diphosphate = (1S,5S)-beta-pinene + diphosphate. It functions in the pathway terpene metabolism; oleoresin biosynthesis. Its pathway is secondary metabolite biosynthesis; terpenoid biosynthesis. Its function is as follows. Monoterpene synthase (TPS) involved in the biosynthesis of monoterpene natural products included in conifer oleoresin secretions and volatile emissions; these compounds contribute to biotic and abiotic stress defense against herbivores and pathogens. Catalyzes the conversion of (2E)-geranyl diphosphate (GPP) to (-)-alpha-pinene and, to a lower extent, to (-)-beta-pinene. The polypeptide is (-)-alpha pinene synthase 1, chloroplastic (Pinus contorta (Shore pine)).